Reading from the N-terminus, the 278-residue chain is F-box only protein 17 (278 aa).

The F-box domain maps to serine 15–glutamine 62. Residues tyrosine 99–isoleucine 275 enclose the FBA domain.

In terms of assembly, part of a SCF (SKP1-cullin-F-box) protein ligase complex. Interacts with SKP1 and CUL1. Expressed in heart, skeletal muscle, liver and kidney. Expressed at lower levels in spleen and brain.

Functionally, substrate-recognition component of the SCF (SKP1-CUL1-F-box protein)-type E3 ubiquitin ligase complex. Able to recognize and bind denatured glycoproteins, which are modified with complex-type oligosaccharides. Also recognizes sulfated glycans. Does not bind high-mannose glycoproteins. This is F-box only protein 17 (FBXO17) from Homo sapiens (Human).